Consider the following 225-residue polypeptide: Membrane-spanning 4-domains subfamily A member 4D (225 aa).

Topologically, residues 1-42 are cytoplasmic; that stretch reads MQGLAQTTMAVVPGGAPPSENSVIKSQMWNKNKEKFLKGEPK. The helical transmembrane segment at 43–63 threads the bilayer; that stretch reads VLGAIQVMIAFINFSLGIIII. Over 64–73 the chain is Extracellular; sequence LNRVSERFMS. Residues 74-94 form a helical membrane-spanning segment; the sequence is VLLLAPFWGSIMFIFSGSLSI. Over 95-113 the chain is Cytoplasmic; that stretch reads AAGVKPTKAMIISSLSVNT. The chain crosses the membrane as a helical span at residues 114 to 134; that stretch reads ISSVLAVAASIIGVISVISGV. Residues 135-148 lie on the Extracellular side of the membrane; that stretch reads FRQFRSQPAIASLD. The helical transmembrane segment at 149-169 threads the bilayer; the sequence is VLMTILNMLEFCIAVSVSAFG. The Cytoplasmic portion of the chain corresponds to 170–225; the sequence is CKASCCNSSEVLVVLPSNSAVTVTAPPMILQPLPPSECQGKNVPENLYRNQPGEIV.

The protein belongs to the MS4A family. Expressed in thymus, spleen, peripheral lymph node, liver, kidney, heart, colon, lung, and testes.

It is found in the membrane. May be involved in signal transduction as a component of a multimeric receptor complex. The polypeptide is Membrane-spanning 4-domains subfamily A member 4D (Ms4a4d) (Mus musculus (Mouse)).